The chain runs to 414 residues: Bifunctional protein GlmU (414 aa).

The pyrophosphorylase stretch occupies residues 1–208; it reads MDAVILCAGS…SSKLYGIELN (208 aa). Residues 6–9, Gln74, and Gly79 each bind UTP; that span reads LCAG. Residues Thr80, Gly130, Asn142, and Asn162 each coordinate N-acetyl-alpha-D-glucosamine 1-phosphate. A linker region spans residues 209–228; it reads GYWNDIGRPWDVLSANNYFL. The tract at residues 229 to 414 is N-acetyltransferase; it reads KNIMPKISGN…KDELIIKKRN (186 aa). Catalysis depends on His312, which acts as the Proton acceptor. The acetyl-CoA site is built by Ala388 and Lys405.

It in the N-terminal section; belongs to the N-acetylglucosamine-1-phosphate uridyltransferase family. The protein in the C-terminal section; belongs to the transferase hexapeptide repeat family.

It carries out the reaction N-acetyl-alpha-D-glucosamine 1-phosphate + UTP + H(+) = UDP-N-acetyl-alpha-D-glucosamine + diphosphate. The catalysed reaction is alpha-D-glucosamine 1-phosphate + acetyl-CoA = N-acetyl-alpha-D-glucosamine 1-phosphate + CoA + H(+). It participates in nucleotide-sugar biosynthesis; UDP-N-acetyl-alpha-D-glucosamine biosynthesis; N-acetyl-alpha-D-glucosamine 1-phosphate from alpha-D-glucosamine 6-phosphate (route II): step 2/2. It functions in the pathway nucleotide-sugar biosynthesis; UDP-N-acetyl-alpha-D-glucosamine biosynthesis; UDP-N-acetyl-alpha-D-glucosamine from N-acetyl-alpha-D-glucosamine 1-phosphate: step 1/1. Functionally, catalyzes the last two sequential reactions in the de novo biosynthetic pathway for UDP-N-acetyl-glucosamine (UDP-GlcNAc). Responsible for the acetylation of GlcN-1-P to GlcNAc-1-P, and for the uridyl transfer from UTP to GlcNAc-1-P, to produce UDP-GlcNAc and pyrophosphate. The polypeptide is Bifunctional protein GlmU (Methanococcus vannielii (strain ATCC 35089 / DSM 1224 / JCM 13029 / OCM 148 / SB)).